A 169-amino-acid polypeptide reads, in one-letter code: Crossover junction endodeoxyribonuclease RuvC (169 aa).

Residues D11, E71, and D143 contribute to the active site. Residues D11, E71, and D143 each coordinate Mg(2+).

Belongs to the RuvC family. As to quaternary structure, homodimer which binds Holliday junction (HJ) DNA. The HJ becomes 2-fold symmetrical on binding to RuvC with unstacked arms; it has a different conformation from HJ DNA in complex with RuvA. In the full resolvosome a probable DNA-RuvA(4)-RuvB(12)-RuvC(2) complex forms which resolves the HJ. It depends on Mg(2+) as a cofactor.

The protein localises to the cytoplasm. It catalyses the reaction Endonucleolytic cleavage at a junction such as a reciprocal single-stranded crossover between two homologous DNA duplexes (Holliday junction).. Its function is as follows. The RuvA-RuvB-RuvC complex processes Holliday junction (HJ) DNA during genetic recombination and DNA repair. Endonuclease that resolves HJ intermediates. Cleaves cruciform DNA by making single-stranded nicks across the HJ at symmetrical positions within the homologous arms, yielding a 5'-phosphate and a 3'-hydroxyl group; requires a central core of homology in the junction. The consensus cleavage sequence is 5'-(A/T)TT(C/G)-3'. Cleavage occurs on the 3'-side of the TT dinucleotide at the point of strand exchange. HJ branch migration catalyzed by RuvA-RuvB allows RuvC to scan DNA until it finds its consensus sequence, where it cleaves and resolves the cruciform DNA. This chain is Crossover junction endodeoxyribonuclease RuvC, found in Bartonella henselae (strain ATCC 49882 / DSM 28221 / CCUG 30454 / Houston 1) (Rochalimaea henselae).